We begin with the raw amino-acid sequence, 327 residues long: uncharacterized protein (327 aa).

The first 23 residues, 1–23, serve as a signal peptide directing secretion; it reads MGGGRLPPLWLPLLIAWSEWGNC. Residues asparagine 144 and asparagine 239 are each glycosylated (N-linked (GlcNAc...) asparagine; by host). Positions 298–327 are disordered; sequence EESEAAEETAAGEASAVAAAAVSEEEQRRE. The span at 305 to 319 shows a compositional bias: low complexity; that stretch reads ETAAGEASAVAAAAV.

This is an uncharacterized protein from Human cytomegalovirus (strain AD169) (HHV-5).